The following is a 323-amino-acid chain: Sphingolipid delta(4)-desaturase/C4-monooxygenase DES2 (323 aa).

The N-myristoyl glycine moiety is linked to residue glycine 2. A run of 2 helical transmembrane segments spans residues proline 41–valine 61 and tryptophan 68–isoleucine 88. The Histidine box-1 signature appears at histidine 89 to histidine 93. Residues threonine 95–threonine 99 form a required for C4-hydroxylase activity region. The Histidine box-2 motif lies at histidine 128 to histidine 132. Residues valine 210 to alanine 231 form a helical membrane-spanning segment. The short motif at histidine 259 to histidine 263 is the Histidine box-3 element.

The protein belongs to the fatty acid desaturase type 1 family. DEGS subfamily. Highly expressed in intestinal crypt cells and adjacent epithelial cells (at protein level).

The protein resides in the endoplasmic reticulum membrane. It carries out the reaction a dihydroceramide + 2 Fe(II)-[cytochrome b5] + O2 + 2 H(+) = a phytoceramide + 2 Fe(III)-[cytochrome b5] + H2O. The catalysed reaction is an N-acylsphinganine + 2 Fe(II)-[cytochrome b5] + O2 + 2 H(+) = an N-acylsphing-4-enine + 2 Fe(III)-[cytochrome b5] + 2 H2O. It catalyses the reaction an N-acylsphinganine + 2 Fe(II)-[cytochrome b5] + O2 + 2 H(+) = an N-acyl-(4R)-4-hydroxysphinganine + 2 Fe(III)-[cytochrome b5] + H2O. The enzyme catalyses N-octanoylsphinganine + 2 Fe(II)-[cytochrome b5] + O2 + 2 H(+) = N-octanoyl-4-hydroxysphinganine + 2 Fe(III)-[cytochrome b5] + H2O. It functions in the pathway membrane lipid metabolism; sphingolipid biosynthesis. Its function is as follows. Bifunctional enzyme which acts both as a sphingolipid delta(4)-desaturase and a sphingolipid C4-monooxygenase. This is Sphingolipid delta(4)-desaturase/C4-monooxygenase DES2 from Mus musculus (Mouse).